The sequence spans 866 residues: Sphingomyelin phosphodiesterase 4 (866 aa).

Phosphoserine is present on residues Ser169 and Ser285. Phosphothreonine is present on Thr708. Ser792 bears the Phosphoserine mark. Residues 822 to 842 traverse the membrane as a helical segment; sequence LLLAFFVASLFCVGPLPCTLL.

It depends on Mg(2+) as a cofactor. Widely expressed, with highest levels in heart and skeletal muscle. As to expression, expressed in skeletal muscle (at protein level). In terms of tissue distribution, expressed in skeletal muscle but a lower levels than isoform 1 (at protein level).

It is found in the endoplasmic reticulum membrane. The protein localises to the golgi apparatus membrane. It localises to the nucleus envelope. The protein resides in the cell membrane. Its subcellular location is the sarcolemma. It catalyses the reaction a sphingomyelin + H2O = phosphocholine + an N-acylsphing-4-enine + H(+). Its activity is regulated as follows. Activated by phosphatidylserine and tumor necrosis factor (TNF). Inhibited by scyphostatin. Its function is as follows. Catalyzes the hydrolysis of membrane sphingomyelin to form phosphorylcholine and ceramide. It has a relevant role in the homeostasis of membrane sphingolipids, thereby influencing membrane integrity, and endoplasmic reticulum organization and function. May sensitize cells to DNA damage-induced apoptosis. In skeletal muscle, mediates TNF-stimulated oxidant production. The sequence is that of Sphingomyelin phosphodiesterase 4 from Homo sapiens (Human).